The primary structure comprises 432 residues: Trigger factor (432 aa).

The 86-residue stretch at 163-248 (GDIAVIDFEG…LKALNKKELP (86 aa)) folds into the PPIase FKBP-type domain.

This sequence belongs to the FKBP-type PPIase family. Tig subfamily.

Its subcellular location is the cytoplasm. It carries out the reaction [protein]-peptidylproline (omega=180) = [protein]-peptidylproline (omega=0). Involved in protein export. Acts as a chaperone by maintaining the newly synthesized protein in an open conformation. Functions as a peptidyl-prolyl cis-trans isomerase. The polypeptide is Trigger factor (Thermoanaerobacter pseudethanolicus (strain ATCC 33223 / 39E) (Clostridium thermohydrosulfuricum)).